A 632-amino-acid polypeptide reads, in one-letter code: Golgin subfamily A member 8M (632 aa).

The disordered stretch occupies residues 1–77 (MAEETQHNKL…SSATLKDLES (77 aa)). Residues 38 to 50 (TNGSIPQTATSGG) are compositionally biased toward polar residues. Coiled-coil stretches lie at residues 86 to 154 (LDSR…HMKR) and 209 to 421 (KLEQ…SLMA). Residues 352–362 (KQEERIQEQHK) are compositionally biased toward basic and acidic residues. 3 disordered regions span residues 352–384 (KQEE…NKST), 422–456 (LPGE…REAM), and 505–524 (DAAL…DEGE). Residues 508–520 (LGGGHHQAGAQGG) are compositionally biased toward gly residues.

Belongs to the GOLGA8 family.

In Homo sapiens (Human), this protein is Golgin subfamily A member 8M.